The following is a 433-amino-acid chain: Enolase (433 aa).

(2R)-2-phosphoglycerate is bound at residue Gln164. The Proton donor role is filled by Glu206. Asp243, Glu289, and Asp316 together coordinate Mg(2+). (2R)-2-phosphoglycerate-binding residues include Lys341, Arg370, Ser371, and Lys392. Lys341 acts as the Proton acceptor in catalysis.

It belongs to the enolase family. It depends on Mg(2+) as a cofactor.

It is found in the cytoplasm. The protein resides in the secreted. It localises to the cell surface. It catalyses the reaction (2R)-2-phosphoglycerate = phosphoenolpyruvate + H2O. The protein operates within carbohydrate degradation; glycolysis; pyruvate from D-glyceraldehyde 3-phosphate: step 4/5. In terms of biological role, catalyzes the reversible conversion of 2-phosphoglycerate (2-PG) into phosphoenolpyruvate (PEP). It is essential for the degradation of carbohydrates via glycolysis. This chain is Enolase, found in Borreliella afzelii (strain PKo) (Borrelia afzelii).